A 173-amino-acid polypeptide reads, in one-letter code: NADH-ubiquinone oxidoreductase chain 6 (173 aa).

The next 5 membrane-spanning stretches (helical) occupy residues Met1–Ser21, Tyr27–Gly47, Val48–Val68, Gly91–Leu111, and Val141–Leu161.

The protein belongs to the complex I subunit 6 family.

Its subcellular location is the mitochondrion membrane. The enzyme catalyses a ubiquinone + NADH + 5 H(+)(in) = a ubiquinol + NAD(+) + 4 H(+)(out). Core subunit of the mitochondrial membrane respiratory chain NADH dehydrogenase (Complex I) that is believed to belong to the minimal assembly required for catalysis. Complex I functions in the transfer of electrons from NADH to the respiratory chain. The immediate electron acceptor for the enzyme is believed to be ubiquinone. The polypeptide is NADH-ubiquinone oxidoreductase chain 6 (MT-ND6) (Fratercula arctica (Atlantic puffin)).